Here is a 476-residue protein sequence, read N- to C-terminus: Aspartyl/glutamyl-tRNA(Asn/Gln) amidotransferase subunit B (476 aa).

It belongs to the GatB/GatE family. GatB subfamily. In terms of assembly, heterotrimer of A, B and C subunits.

The enzyme catalyses L-glutamyl-tRNA(Gln) + L-glutamine + ATP + H2O = L-glutaminyl-tRNA(Gln) + L-glutamate + ADP + phosphate + H(+). The catalysed reaction is L-aspartyl-tRNA(Asn) + L-glutamine + ATP + H2O = L-asparaginyl-tRNA(Asn) + L-glutamate + ADP + phosphate + 2 H(+). Allows the formation of correctly charged Asn-tRNA(Asn) or Gln-tRNA(Gln) through the transamidation of misacylated Asp-tRNA(Asn) or Glu-tRNA(Gln) in organisms which lack either or both of asparaginyl-tRNA or glutaminyl-tRNA synthetases. The reaction takes place in the presence of glutamine and ATP through an activated phospho-Asp-tRNA(Asn) or phospho-Glu-tRNA(Gln). This is Aspartyl/glutamyl-tRNA(Asn/Gln) amidotransferase subunit B from Clostridium botulinum (strain Loch Maree / Type A3).